A 297-amino-acid chain; its full sequence is Phosphoribosylaminoimidazole-succinocarboxamide synthase (297 aa).

It belongs to the SAICAR synthetase family.

It catalyses the reaction 5-amino-1-(5-phospho-D-ribosyl)imidazole-4-carboxylate + L-aspartate + ATP = (2S)-2-[5-amino-1-(5-phospho-beta-D-ribosyl)imidazole-4-carboxamido]succinate + ADP + phosphate + 2 H(+). The protein operates within purine metabolism; IMP biosynthesis via de novo pathway; 5-amino-1-(5-phospho-D-ribosyl)imidazole-4-carboxamide from 5-amino-1-(5-phospho-D-ribosyl)imidazole-4-carboxylate: step 1/2. The protein is Phosphoribosylaminoimidazole-succinocarboxamide synthase of Mycobacterium ulcerans (strain Agy99).